Reading from the N-terminus, the 585-residue chain is Cytoplasmic polyadenylation element-binding protein 1 (585 aa).

The tract at residues 1–32 (MQHQLKACGDVKTSSRAQQNHRRSTAASAKRS) is disordered. RRM domains follow at residues 251–356 (RKVF…PWRL) and 373–444 (RTVF…HAET). Positions 513–533 (DQTRILPRPPHHPAAHHSHQR) are disordered. Basic residues predominate over residues 521–532 (PPHHPAAHHSHQ).

In terms of assembly, interacts with fbf-1.

In terms of biological role, cytoplasmic polyadenylation element binding protein that binds to and regulates the translation of specific mRNAs. Essential for progression through meiosis. Involved in spermatogenesis. The polypeptide is Cytoplasmic polyadenylation element-binding protein 1 (cpb-1) (Caenorhabditis briggsae).